The chain runs to 330 residues: Acrylyl-CoA reductase AcuI (330 aa).

NADP(+) contacts are provided by residues tyrosine 44, 159–162 (AGGV), 181–183 (TGR), arginine 201, leucine 247, and serine 272.

This sequence belongs to the zinc-containing alcohol dehydrogenase family. Acrylyl-CoA reductase subfamily. Homodimer.

The protein localises to the cytoplasm. It catalyses the reaction propanoyl-CoA + NADP(+) = acryloyl-CoA + NADPH + H(+). Functionally, probably catalyzes the NADPH-dependent reduction of acrylyl-CoA to propanoyl-CoA. Restores acrylate resistance when expressed in an E.coli strain K12 acuI deletion. The chain is Acrylyl-CoA reductase AcuI (acuI) from Ruegeria pomeroyi (strain ATCC 700808 / DSM 15171 / DSS-3) (Silicibacter pomeroyi).